The primary structure comprises 312 residues: tRNA pseudouridine synthase B (312 aa).

Asp-46 serves as the catalytic Nucleophile. Residues Tyr-74, Tyr-177, and Leu-198 each contribute to the substrate site.

Belongs to the pseudouridine synthase TruB family. Type 1 subfamily.

It catalyses the reaction uridine(55) in tRNA = pseudouridine(55) in tRNA. Responsible for synthesis of pseudouridine from uracil-55 in the psi GC loop of transfer RNAs. In Buchnera aphidicola subsp. Acyrthosiphon pisum (strain APS) (Acyrthosiphon pisum symbiotic bacterium), this protein is tRNA pseudouridine synthase B.